We begin with the raw amino-acid sequence, 868 residues long: Alanine--tRNA ligase (868 aa).

His-556, His-560, Cys-666, and His-670 together coordinate Zn(2+).

Belongs to the class-II aminoacyl-tRNA synthetase family. Zn(2+) is required as a cofactor.

It localises to the cytoplasm. It catalyses the reaction tRNA(Ala) + L-alanine + ATP = L-alanyl-tRNA(Ala) + AMP + diphosphate. In terms of biological role, catalyzes the attachment of alanine to tRNA(Ala) in a two-step reaction: alanine is first activated by ATP to form Ala-AMP and then transferred to the acceptor end of tRNA(Ala). Also edits incorrectly charged Ser-tRNA(Ala) and Gly-tRNA(Ala) via its editing domain. The polypeptide is Alanine--tRNA ligase (Elusimicrobium minutum (strain Pei191)).